A 351-amino-acid polypeptide reads, in one-letter code: dTDP-glucose 4,6-dehydratase (351 aa).

NAD(+)-binding positions include 12 to 13 (FI), 32 to 35 (DALT), 58 to 59 (DI), 80 to 84 (FAAES), and Thr-99. Ser-84 contributes to the substrate binding site. Thr-133 is a substrate binding site. Asp-134 acts as the Proton donor in catalysis. Active-site proton acceptor residues include Glu-135 and Tyr-158. NAD(+) is bound at residue 158–162 (YSASK). Asn-187 lines the substrate pocket. Asn-188 provides a ligand contact to NAD(+). Residues 197–198 (KL), 213–215 (PVY), Arg-222, Asn-257, and 289–293 (DRPGH) each bind substrate.

Belongs to the NAD(P)-dependent epimerase/dehydratase family. dTDP-glucose dehydratase subfamily. As to quaternary structure, homodimer. NAD(+) serves as cofactor.

It carries out the reaction dTDP-alpha-D-glucose = dTDP-4-dehydro-6-deoxy-alpha-D-glucose + H2O. Its pathway is carbohydrate biosynthesis; dTDP-L-rhamnose biosynthesis. The protein operates within bacterial outer membrane biogenesis; LPS O-antigen biosynthesis. In terms of biological role, catalyzes the dehydration of dTDP-D-glucose to form dTDP-6-deoxy-D-xylo-4-hexulose via a three-step process involving oxidation, dehydration and reduction. This chain is dTDP-glucose 4,6-dehydratase (rfbB), found in Xanthomonas campestris pv. campestris (strain ATCC 33913 / DSM 3586 / NCPPB 528 / LMG 568 / P 25).